The primary structure comprises 592 residues: Aspartate--tRNA(Asp/Asn) ligase (592 aa).

Glutamate 173 serves as a coordination point for L-aspartate. The segment at 197 to 200 (QLFK) is aspartate. Arginine 219 lines the L-aspartate pocket. ATP is bound by residues 219–221 (RDE) and glutamine 228. Residue histidine 451 coordinates L-aspartate. Glutamate 486 lines the ATP pocket. Arginine 493 contacts L-aspartate. ATP is bound at residue 538–541 (GLDR).

It belongs to the class-II aminoacyl-tRNA synthetase family. Type 1 subfamily. As to quaternary structure, homodimer.

The protein resides in the cytoplasm. It carries out the reaction tRNA(Asx) + L-aspartate + ATP = L-aspartyl-tRNA(Asx) + AMP + diphosphate. Aspartyl-tRNA synthetase with relaxed tRNA specificity since it is able to aspartylate not only its cognate tRNA(Asp) but also tRNA(Asn). Reaction proceeds in two steps: L-aspartate is first activated by ATP to form Asp-AMP and then transferred to the acceptor end of tRNA(Asp/Asn). The sequence is that of Aspartate--tRNA(Asp/Asn) ligase from Alkalilimnicola ehrlichii (strain ATCC BAA-1101 / DSM 17681 / MLHE-1).